Here is a 38-residue protein sequence, read N- to C-terminus: Photosystem II reaction center protein L (38 aa).

A helical transmembrane segment spans residues 17 to 37; the sequence is SLFWGLLLIFVLAILFSNYFF.

This sequence belongs to the PsbL family. As to quaternary structure, PSII is composed of 1 copy each of membrane proteins PsbA, PsbB, PsbC, PsbD, PsbE, PsbF, PsbH, PsbI, PsbJ, PsbK, PsbL, PsbM, PsbT, PsbX, PsbY, PsbZ, Psb30/Ycf12, at least 3 peripheral proteins of the oxygen-evolving complex and a large number of cofactors. It forms dimeric complexes.

The protein resides in the plastid. It is found in the chloroplast thylakoid membrane. Its function is as follows. One of the components of the core complex of photosystem II (PSII). PSII is a light-driven water:plastoquinone oxidoreductase that uses light energy to abstract electrons from H(2)O, generating O(2) and a proton gradient subsequently used for ATP formation. It consists of a core antenna complex that captures photons, and an electron transfer chain that converts photonic excitation into a charge separation. This subunit is found at the monomer-monomer interface and is required for correct PSII assembly and/or dimerization. The polypeptide is Photosystem II reaction center protein L (Chara vulgaris (Common stonewort)).